The chain runs to 689 residues: DNA-directed RNA polymerase subunit beta' (689 aa).

4 residues coordinate Zn(2+): C69, C71, C87, and C90. Mg(2+) contacts are provided by D489, D491, and D493.

It belongs to the RNA polymerase beta' chain family. RpoC1 subfamily. In terms of assembly, in plastids the minimal PEP RNA polymerase catalytic core is composed of four subunits: alpha, beta, beta', and beta''. When a (nuclear-encoded) sigma factor is associated with the core the holoenzyme is formed, which can initiate transcription. Mg(2+) is required as a cofactor. It depends on Zn(2+) as a cofactor.

Its subcellular location is the plastid. It localises to the chloroplast. The enzyme catalyses RNA(n) + a ribonucleoside 5'-triphosphate = RNA(n+1) + diphosphate. In terms of biological role, DNA-dependent RNA polymerase catalyzes the transcription of DNA into RNA using the four ribonucleoside triphosphates as substrates. In Lactuca sativa (Garden lettuce), this protein is DNA-directed RNA polymerase subunit beta'.